Here is a 438-residue protein sequence, read N- to C-terminus: Histidine--tRNA ligase (438 aa).

This sequence belongs to the class-II aminoacyl-tRNA synthetase family. Homodimer.

It localises to the cytoplasm. The enzyme catalyses tRNA(His) + L-histidine + ATP = L-histidyl-tRNA(His) + AMP + diphosphate + H(+). The polypeptide is Histidine--tRNA ligase (Blochmanniella pennsylvanica (strain BPEN)).